The chain runs to 450 residues: Transcription factor AP-2 gamma (450 aa).

Lysine 10 participates in a covalent cross-link: Glycyl lysine isopeptide (Lys-Gly) (interchain with G-Cter in SUMO). Disordered stretches follow at residues 13-63 and 90-126; these read EDCE…FPPP and LHQPAPTGSQQQAWPGRQSQEGAGLPSHHGRPAGLLP. Positions 59–64 match the PPxY motif motif; sequence YFPPPY. Polar residues predominate over residues 95 to 110; that stretch reads PTGSQQQAWPGRQSQE. The residue at position 252 (serine 252) is a Phosphoserine; by PKA. The segment at 293-424 is H-S-H (helix-span-helix), dimerization; sequence RRKAAHVTLL…YIKEALIVID (132 aa). A disordered region spans residues 431–450; it reads GDQSPADSNKTLEKMEKHRK. Serine 434 carries the phosphoserine modification. The span at 440 to 450 shows a compositional bias: basic and acidic residues; the sequence is KTLEKMEKHRK.

The protein belongs to the AP-2 family. In terms of assembly, binds DNA as a dimer. Can form homodimers or heterodimers with other AP-2 family members. Interacts with WWOX. Interacts with UBE2I. Interacts with KCTD1; this interaction represses transcription activation. Interacts with CITED2 (via C-terminus); the interaction stimulates TFAP2B-transcriptional activity. Interacts with CITED4. Interacts with MTA1. Post-translationally, sumoylated on Lys-10; which inhibits transcriptional activity.

It localises to the nucleus. Functionally, sequence-specific DNA-binding transcription factor that interacts with cellular enhancer elements to regulate transcription of selected genes, and which plays a key role in early embryonic development. AP-2 factors bind to the consensus sequence 5'-GCCNNNGGC-3' and activate genes involved in a large spectrum of important biological functions. TFAP2C plays a key role in early embryonic development by regulating both inner cell mass (ICM) and trophectoderm differentiation. At the 8-cell stage, during morula development, controls expression of cell-polarity genes. Upon trophoblast commitment, binds to late trophectoderm genes in blastocysts together with CDX2, and later to extra-embryonic ectoderm genes together with SOX2. Binds to both closed and open chromatin with other transcription factors. Involved in the MTA1-mediated epigenetic regulation of ESR1 expression in breast cancer. The sequence is that of Transcription factor AP-2 gamma (TFAP2C) from Homo sapiens (Human).